The chain runs to 259 residues: Keratinocyte-associated transmembrane protein 2 (259 aa).

The first 44 residues, M1–C44, serve as a signal peptide directing secretion. The Extracellular portion of the chain corresponds to S45–D190. The segment at R47–E155 is disordered. A compositionally biased stretch (polar residues) spans N50 to L81. Residues N54 and N68 are each glycosylated (N-linked (GlcNAc...) asparagine). Residues S82–A104 show a composition bias toward low complexity. Positions P105 to L122 are enriched in acidic residues. S165 carries the phosphoserine modification. The helical transmembrane segment at S191–Y211 threads the bilayer. At H212 to F259 the chain is on the cytoplasmic side. S223 and S250 each carry phosphoserine.

Its subcellular location is the membrane. This Mus musculus (Mouse) protein is Keratinocyte-associated transmembrane protein 2 (Kct2).